The primary structure comprises 63 residues: Large ribosomal subunit protein uL30 (63 aa).

This sequence belongs to the universal ribosomal protein uL30 family. In terms of assembly, part of the 50S ribosomal subunit.

This chain is Large ribosomal subunit protein uL30, found in Geobacillus stearothermophilus (Bacillus stearothermophilus).